We begin with the raw amino-acid sequence, 157 residues long: Ribosome-binding factor A (157 aa).

Residues 127–157 (QQQFGSEDASVEDEVLGDDVADDADETEGKD) form a disordered region. Residues 135 to 157 (ASVEDEVLGDDVADDADETEGKD) show a composition bias toward acidic residues.

This sequence belongs to the RbfA family. As to quaternary structure, monomer. Binds 30S ribosomal subunits, but not 50S ribosomal subunits or 70S ribosomes.

Its subcellular location is the cytoplasm. One of several proteins that assist in the late maturation steps of the functional core of the 30S ribosomal subunit. Associates with free 30S ribosomal subunits (but not with 30S subunits that are part of 70S ribosomes or polysomes). Required for efficient processing of 16S rRNA. May interact with the 5'-terminal helix region of 16S rRNA. This Shewanella baltica (strain OS155 / ATCC BAA-1091) protein is Ribosome-binding factor A.